A 325-amino-acid polypeptide reads, in one-letter code: NADH-quinone oxidoreductase subunit H (325 aa).

The next 8 membrane-spanning stretches (helical) occupy residues 11–31 (ILLS…CGAF), 81–101 (VIFT…FAIV), 114–134 (IGIL…LFAG), 154–174 (LSYE…AGSF), 186–206 (IWNV…GVAV), 237–257 (FFVG…TLFF), 265–285 (LPPF…FILI), and 304–324 (VCLP…LWQA).

Belongs to the complex I subunit 1 family. In terms of assembly, NDH-1 is composed of 13 different subunits. Subunits NuoA, H, J, K, L, M, N constitute the membrane sector of the complex.

Its subcellular location is the cell inner membrane. The catalysed reaction is a quinone + NADH + 5 H(+)(in) = a quinol + NAD(+) + 4 H(+)(out). NDH-1 shuttles electrons from NADH, via FMN and iron-sulfur (Fe-S) centers, to quinones in the respiratory chain. The immediate electron acceptor for the enzyme in this species is believed to be ubiquinone. Couples the redox reaction to proton translocation (for every two electrons transferred, four hydrogen ions are translocated across the cytoplasmic membrane), and thus conserves the redox energy in a proton gradient. This subunit may bind ubiquinone. This chain is NADH-quinone oxidoreductase subunit H, found in Enterobacter sp. (strain 638).